We begin with the raw amino-acid sequence, 196 residues long: Imidazoleglycerol-phosphate dehydratase (196 aa).

Belongs to the imidazoleglycerol-phosphate dehydratase family.

It localises to the cytoplasm. It carries out the reaction D-erythro-1-(imidazol-4-yl)glycerol 3-phosphate = 3-(imidazol-4-yl)-2-oxopropyl phosphate + H2O. It participates in amino-acid biosynthesis; L-histidine biosynthesis; L-histidine from 5-phospho-alpha-D-ribose 1-diphosphate: step 6/9. The polypeptide is Imidazoleglycerol-phosphate dehydratase (Dehalococcoides mccartyi (strain CBDB1)).